A 285-amino-acid chain; its full sequence is Foldase protein PrsA 2 (285 aa).

Positions 1 to 20 (MRGKHIFIITALISILMLSA) are cleaved as a signal peptide. Cysteine 21 carries N-palmitoyl cysteine lipidation. Cysteine 21 is lipidated: S-diacylglycerol cysteine. One can recognise a PpiC domain in the interval 134–224 (KPEIKASHIL…NGYHVIKLTD (91 aa)).

Belongs to the PrsA family.

Its subcellular location is the cell membrane. It carries out the reaction [protein]-peptidylproline (omega=180) = [protein]-peptidylproline (omega=0). Functionally, plays a major role in protein secretion by helping the post-translocational extracellular folding of several secreted proteins. In Bacillus cereus (strain ATCC 14579 / DSM 31 / CCUG 7414 / JCM 2152 / NBRC 15305 / NCIMB 9373 / NCTC 2599 / NRRL B-3711), this protein is Foldase protein PrsA 2 (prsA2).